The following is a 138-amino-acid chain: MLDKLDAALRFQQEALNLRAQRQEVLAANIANADTPGYQARDIDFASELKKVMQRGRDATSVVALTMTSTQHIPAQALTPPTAELQYRIPDQPSLDGNTVDMDRERTQFADNSLQYQMSLSALSGQIKGMMNVLQSGN.

It belongs to the flagella basal body rod proteins family. The basal body constitutes a major portion of the flagellar organelle and consists of a number of rings mounted on a central rod. In Gram-negative bacteria, at least four rings, L, P, S and M are present, whereas Gram-positive bacteria lack the L and P rings. The rod consists of about 26 subunits of FlgG in the distal portion, and FlgB, FlgC and FlgF build up the proximal portion of the rod with about 6 subunits each. Rod assembly occurs by export via the flagellum-specific pathway of its constituent proteins and by their incorporation into the rod structure in the probable order of FlgB, FlgC, FlgF and FlgG. Another protein, FliE, also assembles onto the stable rod structure.

It localises to the bacterial flagellum basal body. Structural component of flagellum, the bacterial motility apparatus. Part of the rod structure of flagellar basal body. The protein is Flagellar basal body rod protein FlgB (flgB) of Escherichia coli (strain K12).